The sequence spans 327 residues: Porphobilinogen deaminase (327 aa).

S-(dipyrrolylmethanemethyl)cysteine is present on Cys-251.

The protein belongs to the HMBS family. The cofactor is dipyrromethane.

The enzyme catalyses 4 porphobilinogen + H2O = hydroxymethylbilane + 4 NH4(+). It participates in porphyrin-containing compound metabolism; protoporphyrin-IX biosynthesis; coproporphyrinogen-III from 5-aminolevulinate: step 2/4. In terms of biological role, catalyzes the tetrapolymerization of the monopyrrole porphobilinogen (PBG) into the hydroxymethylbilane pre-uroporphyrinogen in several discrete steps. This chain is Porphobilinogen deaminase (HEM3), found in Saccharomyces cerevisiae (strain ATCC 204508 / S288c) (Baker's yeast).